The following is a 199-amino-acid chain: uncharacterized protein (199 aa).

The signal sequence occupies residues 1–23 (MSARAPKELRLALPPCLLNRTFA). Residues N19 and N26 are each glycosylated (N-linked (GlcNAc...) asparagine). At 24–60 (SHNASGGSSAGLRSSGAGGGTCITQVGQQLFQSFSST) the chain is on the extracellular side. The chain crosses the membrane as a helical span at residues 61–81 (LVLIVLVTLIFCLLVLSLSTF). At 82-199 (HIHKRRMKKR…EGLLQTVVLS (118 aa)) the chain is on the cytoplasmic side. Residues 93–190 (MQRAQEEYER…ASSCLDTPGE (98 aa)) form a disordered region. Basic and acidic residues-rich tracts occupy residues 95-106 (RAQEEYERDHCS) and 124-135 (HGKETRLERQPR). Residues 147-163 (SSSSSSSSSPGLLCQGP) are compositionally biased toward low complexity. The segment covering 164-176 (CAPPPPLPAPTPQ) has biased composition (pro residues).

Its subcellular location is the membrane. This is an uncharacterized protein from Mus musculus (Mouse).